Here is a 434-residue protein sequence, read N- to C-terminus: Aspartate--tRNA(Asp/Asn) ligase (434 aa).

Residue Glu-167 coordinates L-aspartate. Residues Gln-189 to Lys-192 form an aspartate region. Arg-211 serves as a coordination point for L-aspartate. ATP contacts are provided by residues Arg-211–Glu-213, Arg-219–Leu-221, and Glu-357. Residues Glu-357 and Ser-360 each contribute to the Mg(2+) site. Ser-360 and Arg-364 together coordinate L-aspartate. Gly-405–Arg-408 contacts ATP.

It belongs to the class-II aminoacyl-tRNA synthetase family. Type 2 subfamily. In terms of assembly, homodimer. Requires Mg(2+) as cofactor.

The protein localises to the cytoplasm. It carries out the reaction tRNA(Asx) + L-aspartate + ATP = L-aspartyl-tRNA(Asx) + AMP + diphosphate. In terms of biological role, aspartyl-tRNA synthetase with relaxed tRNA specificity since it is able to aspartylate not only its cognate tRNA(Asp) but also tRNA(Asn). Reaction proceeds in two steps: L-aspartate is first activated by ATP to form Asp-AMP and then transferred to the acceptor end of tRNA(Asp/Asn). The sequence is that of Aspartate--tRNA(Asp/Asn) ligase from Haloquadratum walsbyi (strain DSM 16790 / HBSQ001).